We begin with the raw amino-acid sequence, 254 residues long: Alcohol dehydrogenase 1 (254 aa).

Phe-10–Leu-33 provides a ligand contact to NAD(+). Ser-138 serves as a coordination point for substrate. Tyr-151 acts as the Proton acceptor in catalysis.

Belongs to the short-chain dehydrogenases/reductases (SDR) family. In terms of assembly, homodimer.

It carries out the reaction a primary alcohol + NAD(+) = an aldehyde + NADH + H(+). The catalysed reaction is a secondary alcohol + NAD(+) = a ketone + NADH + H(+). The polypeptide is Alcohol dehydrogenase 1 (Adh1) (Drosophila mulleri (Fruit fly)).